Consider the following 222-residue polypeptide: MIF4G domain-containing protein B (222 aa).

The 203-residue stretch at 3–205 folds into the MIF4G domain; it reads NSSKEDYKIQ…LEILEFRAGG (203 aa).

The protein belongs to the MIF4GD family. As to quaternary structure, interacts with eif4g1, eif4g2 and slbp; probably tethered by SLBP to the 3'-end of mRNAs ending with the histone stem-loop, it also interacts with eif4g1 which is bound to their 5'-end.

The protein resides in the cytoplasm. It is found in the nucleus. In terms of biological role, functions in replication-dependent translation of histone mRNAs which differ from other eukaryotic mRNAs in that they do not end with a poly-A tail but a stem-loop. May participate in circularizing those mRNAs specifically enhancing their translation. The polypeptide is MIF4G domain-containing protein B (mif4gdb) (Danio rerio (Zebrafish)).